The chain runs to 330 residues: T-cell surface glycoprotein CD1b4 (330 aa).

The signal sequence occupies residues 1–15; the sequence is MLLLALAFFFPAGDT. Residues 16–299 lie on the Extracellular side of the membrane; sequence QNVLPGKISF…LYWGHSISIG (284 aa). Residues Asn-35, Asn-72, and Asn-143 are each glycosylated (N-linked (GlcNAc...) asparagine). 2 disulfides stabilise this stretch: Cys-117-Cys-181 and Cys-221-Cys-276. The Ig-like domain maps to 182–292; sequence PRYLMSVIEA…LEGQDIILYW (111 aa). A helical transmembrane segment spans residues 300-320; that stretch reads WIILAVLVPCLIVLVLFILWF. The Cytoplasmic portion of the chain corresponds to 321–330; it reads YRRWSYEDIF. The Internalization signal motif lies at 326–329; the sequence is YEDI.

Heterodimer with B2M (beta-2-microglobulin). Interacts with saposin C.

The protein localises to the cell membrane. It is found in the endosome membrane. It localises to the lysosome membrane. Its function is as follows. Antigen-presenting protein that binds self and non-self lipid and glycolipid antigens and presents them to T-cell receptors on natural killer T-cells. This Cavia porcellus (Guinea pig) protein is T-cell surface glycoprotein CD1b4 (CD1B4).